A 358-amino-acid polypeptide reads, in one-letter code: E3 ubiquitin-protein ligase RFI2 (358 aa).

The interval 1 to 34 (MAGAKDSGCDDDLRIAGGCDPGKRGNPEDSSSPV) is disordered. The RING-type; atypical zinc finger occupies 38 to 83 (CSICLESVLDDGTRSKAKLQCGHQFHLDCIGSAFNMKGAMQCPNCR). Disordered regions lie at residues 174 to 201 (GPAA…DHFH) and 248 to 313 (SNQR…DQNV). Residues 187 to 201 (TDDHPWNSHSNDHFH) show a composition bias toward basic and acidic residues. The segment covering 248–266 (SNQRSSPAINSYQGSSTQM) has biased composition (polar residues). Residues 299 to 309 (LPPPPPPPPMP) are compositionally biased toward pro residues.

The protein localises to the nucleus. The catalysed reaction is S-ubiquitinyl-[E2 ubiquitin-conjugating enzyme]-L-cysteine + [acceptor protein]-L-lysine = [E2 ubiquitin-conjugating enzyme]-L-cysteine + N(6)-ubiquitinyl-[acceptor protein]-L-lysine.. Its pathway is protein modification; protein ubiquitination. Mediates phytochrome (phyA and phyB)-controlled seedling deetiolation responses such as hypocotyl elongation in response to red and far-red light. Required for light-induced expression of LHCB3 and CHALCONE SYNTHASE (CHS). Negatively regulates CONSTANS (CO) and FLOWERING LOCUS T (FT) expression and photoperiodic flowering. This is E3 ubiquitin-protein ligase RFI2 from Arabidopsis thaliana (Mouse-ear cress).